Here is a 975-residue protein sequence, read N- to C-terminus: Kinesin heavy chain (975 aa).

The Kinesin motor domain maps to serine 12–valine 333. Glycine 92–threonine 99 contributes to the ATP binding site. Residues valine 180–lysine 321 are microtubule-binding. Residues asparagine 335 to lysine 931 are a coiled coil. Residues valine 810–cysteine 891 are necessary for associating with milt. The interval histidine 932 to serine 975 is globular.

This sequence belongs to the TRAFAC class myosin-kinesin ATPase superfamily. Kinesin family. Kinesin subfamily. In terms of assembly, oligomer composed of two heavy chains and two light chains.

It localises to the cytoplasm. It is found in the cytoskeleton. Functionally, kinesin is a microtubule-associated force-producing protein that may play a role in organelle transport. Milt and Miro form an essential protein complex that links Khc to mitochondria for light chain-independent, anterograde transport of mitochondria. This is Kinesin heavy chain (Khc) from Drosophila melanogaster (Fruit fly).